The chain runs to 310 residues: Homoserine kinase (310 aa).

95–105 (PQSRGLGSSAA) provides a ligand contact to ATP.

This sequence belongs to the GHMP kinase family. Homoserine kinase subfamily.

Its subcellular location is the cytoplasm. It catalyses the reaction L-homoserine + ATP = O-phospho-L-homoserine + ADP + H(+). The protein operates within amino-acid biosynthesis; L-threonine biosynthesis; L-threonine from L-aspartate: step 4/5. Catalyzes the ATP-dependent phosphorylation of L-homoserine to L-homoserine phosphate. In Corynebacterium kroppenstedtii (strain DSM 44385 / JCM 11950 / CIP 105744 / CCUG 35717), this protein is Homoserine kinase.